We begin with the raw amino-acid sequence, 145 residues long: Leptin (145 aa).

An N-terminal signal peptide occupies residues 1–12 (LWLWPYLFFIEA).

It belongs to the leptin family.

It is found in the secreted. Functionally, key player in the regulation of energy balance and body weight control. Once released into the circulation, has central and peripheral effects by binding LEPR, found in many tissues, which results in the activation of several major signaling pathways. In the hypothalamus, acts as an appetite-regulating factor that induces a decrease in food intake and an increase in energy consumption by inducing anorexinogenic factors and suppressing orexigenic neuropeptides, also regulates bone mass and secretion of hypothalamo-pituitary-adrenal hormones. In the periphery, increases basal metabolism, influences reproductive function, regulates pancreatic beta-cell function and insulin secretion, is pro-angiogenic for endothelial cell and affects innate and adaptive immunity. In the arcuate nucleus of the hypothalamus, activates by depolarization POMC neurons inducing FOS and SOCS3 expression to release anorexigenic peptides and inhibits by hyperpolarization NPY neurons inducing SOCS3 with a consequent reduction on release of orexigenic peptides. In addition to its known satiety inducing effect, has a modulatory role in nutrient absorption. In the intestine, reduces glucose absorption by enterocytes by activating PKC and leading to a sequential activation of p38, PI3K and ERK signaling pathways which exerts an inhibitory effect on glucose absorption. Acts as a growth factor on certain tissues, through the activation of different signaling pathways increases expression of genes involved in cell cycle regulation such as CCND1, via JAK2-STAT3 pathway, or VEGFA, via MAPK1/3 and PI3K-AKT1 pathways. May also play an apoptotic role via JAK2-STAT3 pathway and up-regulation of BIRC5 expression. Pro-angiogenic, has mitogenic activity on vascular endothelial cells and plays a role in matrix remodeling by regulating the expression of matrix metalloproteinases (MMPs) and tissue inhibitors of metalloproteinases (TIMPs). In innate immunity, modulates the activity and function of neutrophils by increasing chemotaxis and the secretion of oxygen radicals. Increases phagocytosis by macrophages and enhances secretion of pro-inflammatory mediators. Increases cytotoxic ability of NK cells. Plays a pro-inflammatory role, in synergy with IL1B, by inducing NOS2 which promotes the production of IL6, IL8 and Prostaglandin E2, through a signaling pathway that involves JAK2, PI3K, MAP2K1/MEK1 and MAPK14/p38. In adaptive immunity, promotes the switch of memory T-cells towards T helper-1 cell immune responses. Increases CD4(+)CD25(-) T-cell proliferation and reduces autophagy during TCR (T-cell receptor) stimulation, through MTOR signaling pathway activation and BCL2 up-regulation. This Equus caballus (Horse) protein is Leptin (LEP).